A 345-amino-acid polypeptide reads, in one-letter code: Selenide, water dikinase (345 aa).

Residue Cys15 is part of the active site. Residues Lys18 and 46–48 contribute to the ATP site; that span reads SKD. Residue Asp49 participates in Mg(2+) binding. ATP is bound by residues Asp66, Asp89, and 137–139; that span reads GHS. Asp89 contacts Mg(2+). Asp225 is a Mg(2+) binding site.

Belongs to the selenophosphate synthase 1 family. Class I subfamily. Homodimer. Requires Mg(2+) as cofactor.

It catalyses the reaction hydrogenselenide + ATP + H2O = selenophosphate + AMP + phosphate + 2 H(+). Synthesizes selenophosphate from selenide and ATP. The polypeptide is Selenide, water dikinase (Aeromonas hydrophila subsp. hydrophila (strain ATCC 7966 / DSM 30187 / BCRC 13018 / CCUG 14551 / JCM 1027 / KCTC 2358 / NCIMB 9240 / NCTC 8049)).